The following is a 419-amino-acid chain: MENMRSENFNQGVSMEGVKHAPEMANTNRRALRDIKNIIGAPHQHMAVSKRGLLDKPAAKNQAGHRPMTRKFAATLANQPSSAPLAPIGSERQKRTADSAFHGPADMECTKITSDDLPLPMMSEMDEVMGSELKEIEMEDIEEAAPDIDSCDANNSLAVVEYVDEIYSFYRRSEGLSCVSPNYMLSQNDINEKMRGILIDWLIEVHYKLELLDETLFLTVNIIDRFLARENVVRKKLQLVGVTAMLLACKYEEVSVPVVEDLILICDRAYTRTDILEMERMIVNTLQFDMSVPTPYCFMRRFLKAAQSDKKLELMSFFIIELSLVEYEMLKFQPSMLAAAAIYTAQCTINGFKSWNKCCELHTKYSEEQLMECSKMMVELHQKAGHGKLTGVHRKYSTFRYGCAAKSEPAVFLLKSVAL.

The disordered stretch occupies residues 79–116; that stretch reads QPSSAPLAPIGSERQKRTADSAFHGPADMECTKITSDD.

This sequence belongs to the cyclin family. Cyclin AB subfamily. In terms of assembly, interacts with CDKB2-1. Expressed in the intercalary meristem and the elongation zone of internodes. Expressed in adventitious roots at all nodes under submergence conditions.

The protein resides in the nucleus. Involved in the control of the cell cycle at the G2/M (mitosis) transition. May associate to CDKB2-1 and activate CDKB2-1 kinase to promote cell division. This chain is Cyclin-B2-2 (CYCB2-2), found in Oryza sativa subsp. indica (Rice).